A 146-amino-acid chain; its full sequence is Hemoglobin subunit beta (146 aa).

One can recognise a Globin domain in the interval Gln2–His146. The heme b site is built by His63 and His92.

It belongs to the globin family. Heterotetramer of two alpha chains and two beta chains. Red blood cells.

In terms of biological role, involved in oxygen transport from the lung to the various peripheral tissues. The protein is Hemoglobin subunit beta (HBB) of Accipiter gentilis (Northern goshawk).